The primary structure comprises 789 residues: MSVAASASRSASTLCSPQIQQGALKEAKVPPHIWAARHWNLGLRLVPGHASVRAGILVLLIFLPSTLCDLGSVYDSSYETVIPERLPGQGSDDPGGKVSYVLLMQGQKQLLHLEVKGHYSERNFPVYSYHHGILGQEVPLLSQACHYEGHIEGVPGSFVSVSICSGLRGVLIKEETAYGIEPLLFSTDFEHILYTMAHQPVVLCNVTPTDSLGDSSQRQGSSKTDELLALSDLWSHAKYVEMFVVVNHQRFQMWGSDVNTTVQAVVDIIALANSFTRGINTEVVLVGLEIWTEGDPIEVPVDLQATLRNFNLWRQEKLMGRVRHDVAHLIVGHRPGANEGQAFLDGACSGGFAAAVEAFHHEDVLLFAALMAHELGHNLGIRHDRPGCTCGPKHLCLMHETISKTSGFSNCSSDHFLRFLHDHRGACLLDRPWHQSHKRRDAHCGNGVVEESEECDCGNACDSHPCCEPTCTLKVGAQCSEGLCCYKCTFKKKGTLCRPAEDVCDLPEYCNGITGECPANSYMQDGTQCDRIYYCSGGLCKNPDKQCARIYGYPARSAPEECYISVNTKANRFGNCGHPTSANLKYEACSNEDIFCGKLVCTDVRYLPQVKPLHSLLQIPYGDDWCWSMDAYNVTDIPDYGDVQGGTYCAPKKVCMESICTGHATLQYDCHPQEMCHGNGVCNNFKHCHCDAGFSPPDCSSGGNGGSVDSGPVGKPADRNLSLFGVGESPDSRMEDEEINLKVVVLVVPIFLIVLLCCLMLIAYLWSEVQEAVSPGSSSTTSSSESESD.

Residues methionine 1–cysteine 68 form the signal peptide. The Peptidase M12B domain occupies lysine 238–proline 432. A glycan (N-linked (GlcNAc...) asparagine) is linked at asparagine 259. Cystine bridges form between cysteine 348/cysteine 427, cysteine 388/cysteine 411, cysteine 390/cysteine 396, and cysteine 497/cysteine 517. Histidine 373 is a Zn(2+) binding site. Glutamate 374 is an active-site residue. Zn(2+) is bound by residues histidine 377 and histidine 383. Residue asparagine 410 is glycosylated (N-linked (GlcNAc...) asparagine). Residues aspartate 441–aspartate 525 form the Disintegrin domain. Asparagine 633 carries N-linked (GlcNAc...) asparagine glycosylation. An EGF-like domain is found at leucine 666–serine 700. 3 disulfide bridges follow: cysteine 670-cysteine 682, cysteine 676-cysteine 688, and cysteine 690-cysteine 699. The N-linked (GlcNAc...) asparagine glycan is linked to asparagine 720. A helical membrane pass occupies residues valine 743–alanine 763. At tyrosine 764–aspartate 789 the chain is on the cytoplasmic side.

As to quaternary structure, heterodimer with ADAM2/fertilin subunit beta.

It localises to the membrane. Functionally, may be involved in sperm-egg fusion. This chain is Disintegrin and metalloproteinase domain-containing protein 1 (Adam1), found in Rattus norvegicus (Rat).